Reading from the N-terminus, the 69-residue chain is Large ribosomal subunit protein bL31 (69 aa).

Residues Cys17, Cys19, Cys37, and Cys40 each coordinate Zn(2+).

This sequence belongs to the bacterial ribosomal protein bL31 family. Type A subfamily. In terms of assembly, part of the 50S ribosomal subunit. Zn(2+) serves as cofactor.

Binds the 23S rRNA. The sequence is that of Large ribosomal subunit protein bL31 from Caldicellulosiruptor saccharolyticus (strain ATCC 43494 / DSM 8903 / Tp8T 6331).